Consider the following 185-residue polypeptide: Ribosome-recycling factor (185 aa).

It belongs to the RRF family.

The protein localises to the cytoplasm. In terms of biological role, responsible for the release of ribosomes from messenger RNA at the termination of protein biosynthesis. May increase the efficiency of translation by recycling ribosomes from one round of translation to another. In Nitrosomonas eutropha (strain DSM 101675 / C91 / Nm57), this protein is Ribosome-recycling factor.